Consider the following 149-residue polypeptide: Large ribosomal subunit protein eL19 (149 aa).

The interval 45 to 130 (VDEGAIQAKD…RDLYDKAGGG (86 aa)) is disordered. Positions 58-85 (NSRGRARERQKKRAYGHQKGAGSRKGKA) are enriched in basic residues. Over residues 90 to 113 (NSKEDWESRIRAQRTKLRELRDEG) the composition is skewed to basic and acidic residues.

Belongs to the eukaryotic ribosomal protein eL19 family. As to quaternary structure, part of the 50S ribosomal subunit.

In terms of biological role, binds to the 23S rRNA. Located at the polypeptide exit tunnel on the outside of the subunit. This is Large ribosomal subunit protein eL19 from Haloarcula marismortui (strain ATCC 43049 / DSM 3752 / JCM 8966 / VKM B-1809) (Halobacterium marismortui).